A 180-amino-acid chain; its full sequence is Large ribosomal subunit protein uL5 (180 aa).

It belongs to the universal ribosomal protein uL5 family. Part of the 50S ribosomal subunit; part of the 5S rRNA/L5/L18/L25 subcomplex. Contacts the 5S rRNA and the P site tRNA. Forms a bridge to the 30S subunit in the 70S ribosome.

In terms of biological role, this is one of the proteins that bind and probably mediate the attachment of the 5S RNA into the large ribosomal subunit, where it forms part of the central protuberance. In the 70S ribosome it contacts protein S13 of the 30S subunit (bridge B1b), connecting the 2 subunits; this bridge is implicated in subunit movement. Contacts the P site tRNA; the 5S rRNA and some of its associated proteins might help stabilize positioning of ribosome-bound tRNAs. This chain is Large ribosomal subunit protein uL5, found in Xanthomonas axonopodis pv. citri (strain 306).